Here is a 329-residue protein sequence, read N- to C-terminus: Sulfate/thiosulfate import ATP-binding protein CysA (329 aa).

Positions 3–237 (IEVRNVSKRF…PANDFVYHFL (235 aa)) constitute an ABC transporter domain. 35 to 42 (GPSGCGKT) lines the ATP pocket.

The protein belongs to the ABC transporter superfamily. Sulfate/tungstate importer (TC 3.A.1.6) family. The complex is composed of two ATP-binding proteins (CysA), two transmembrane proteins (CysT and CysW) and a solute-binding protein (CysP).

It is found in the cell inner membrane. The catalysed reaction is sulfate(out) + ATP + H2O = sulfate(in) + ADP + phosphate + H(+). It carries out the reaction thiosulfate(out) + ATP + H2O = thiosulfate(in) + ADP + phosphate + H(+). In terms of biological role, part of the ABC transporter complex CysAWTP involved in sulfate/thiosulfate import. Responsible for energy coupling to the transport system. The protein is Sulfate/thiosulfate import ATP-binding protein CysA of Pseudomonas putida (strain ATCC 47054 / DSM 6125 / CFBP 8728 / NCIMB 11950 / KT2440).